A 315-amino-acid chain; its full sequence is Protein FRA10AC1 homolog (315 aa).

Met-1 carries the post-translational modification N-acetylmethionine. The interval 1–28 (MHGHGGYDSDFSDDEQGGGSSKKRKKTV) is disordered. Phosphoserine is present on residues Ser-9 and Ser-12. The residue at position 36 (Lys-36) is an N6-acetyllysine. Over residues 225–235 (KEIKSTKKKSK) the composition is skewed to basic residues. Residues 225 to 308 (KEIKSTKKKS…EKSQEEEFDD (84 aa)) form a disordered region. Composition is skewed to basic and acidic residues over residues 236–245 (TTPECDESPR) and 255–278 (EASKGKDEGHSSSKKSEDSRNRNA). Ser-283 and Ser-285 each carry phosphoserine.

As to quaternary structure, interacts with ESS2.

It is found in the nucleus. In terms of biological role, may be involved in pre-mRNA splicing. The protein is Protein FRA10AC1 homolog (Fra10ac1) of Mus musculus (Mouse).